Here is a 201-residue protein sequence, read N- to C-terminus: L(+)-tartrate dehydratase subunit beta (201 aa).

H37 is a catalytic residue.

It belongs to the class-I fumarase family. As to quaternary structure, heterotetramer of two alpha and two beta subunits.

The catalysed reaction is (2R,3R)-tartrate = oxaloacetate + H2O. This is L(+)-tartrate dehydratase subunit beta (ttdB) from Shigella sonnei (strain Ss046).